We begin with the raw amino-acid sequence, 83 residues long: Mu-theraphotoxin-Hhn2i (83 aa).

An N-terminal signal peptide occupies residues 1 to 21; it reads MKASMFLALAGLVLLFVVGYA. The propeptide occupies 22–48; the sequence is SESEEKEFPRELLSKIFAVDDFKGEER. 3 disulfide bridges follow: Cys-50-Cys-65, Cys-57-Cys-70, and Cys-64-Cys-77. Position 81 is a leucine amide (Leu-81).

The protein belongs to the neurotoxin 10 (Hwtx-1) family. 15 (Hntx-3) subfamily. Monomer. In terms of tissue distribution, expressed by the venom gland.

It localises to the secreted. Functionally, lethal neurotoxin. Selectively blocks tetrodotoxin-sensitive voltage-gated sodium channels (Nav). Does not affect tetrodotoxin-resistant voltage-gated sodium channels or calcium channels. In Cyriopagopus hainanus (Chinese bird spider), this protein is Mu-theraphotoxin-Hhn2i.